The chain runs to 77 residues: MLILTRRVGESLHIGDDIKITLLGIKGNQVRIGIDAPRDVEVHREEIYDRIRRETRKANRRTAEETLDQASRLLSQK.

A disordered region spans residues A58 to K77. Polar residues predominate over residues D68–K77.

Belongs to the CsrA/RsmA family. In terms of assembly, homodimer; the beta-strands of each monomer intercalate to form a hydrophobic core, while the alpha-helices form wings that extend away from the core.

It is found in the cytoplasm. Functionally, a translational regulator that binds mRNA to regulate translation initiation and/or mRNA stability. Usually binds in the 5'-UTR at or near the Shine-Dalgarno sequence preventing ribosome-binding, thus repressing translation. Its main target seems to be the major flagellin gene, while its function is anatagonized by FliW. The protein is Translational regulator CsrA of Magnetococcus marinus (strain ATCC BAA-1437 / JCM 17883 / MC-1).